An 87-amino-acid chain; its full sequence is Cell division protein ZapA (87 aa).

Residues 64 to 87 (VHDYIKLKEEYDRLLQKLHKEKDE) are a coiled coil.

Belongs to the ZapA family. Type 2 subfamily. In terms of assembly, homodimer. Interacts with FtsZ.

It is found in the cytoplasm. Activator of cell division through the inhibition of FtsZ GTPase activity, therefore promoting FtsZ assembly into bundles of protofilaments necessary for the formation of the division Z ring. It is recruited early at mid-cell but it is not essential for cell division. The protein is Cell division protein ZapA of Geobacillus sp. (strain WCH70).